The chain runs to 523 residues: 2-isopropylmalate synthase (523 aa).

Residues 5–267 form the Pyruvate carboxyltransferase domain; the sequence is VIIFDTTLRD…ETGINAKEIH (263 aa). Residues D14, H202, H204, and N238 each coordinate Mn(2+). The regulatory domain stretch occupies residues 392-523; that stretch reads QLKQLVVHSD…QQKARSLGGV (132 aa).

The protein belongs to the alpha-IPM synthase/homocitrate synthase family. LeuA type 1 subfamily. As to quaternary structure, homodimer. Requires Mn(2+) as cofactor.

The protein resides in the cytoplasm. It catalyses the reaction 3-methyl-2-oxobutanoate + acetyl-CoA + H2O = (2S)-2-isopropylmalate + CoA + H(+). The protein operates within amino-acid biosynthesis; L-leucine biosynthesis; L-leucine from 3-methyl-2-oxobutanoate: step 1/4. Catalyzes the condensation of the acetyl group of acetyl-CoA with 3-methyl-2-oxobutanoate (2-ketoisovalerate) to form 3-carboxy-3-hydroxy-4-methylpentanoate (2-isopropylmalate). The polypeptide is 2-isopropylmalate synthase (Shewanella woodyi (strain ATCC 51908 / MS32)).